Consider the following 171-residue polypeptide: 3-hydroxydecanoyl-[acyl-carrier-protein] dehydratase (171 aa).

The active site involves His70.

Belongs to the thioester dehydratase family. FabA subfamily. Homodimer.

It is found in the cytoplasm. It catalyses the reaction a (3R)-hydroxyacyl-[ACP] = a (2E)-enoyl-[ACP] + H2O. It carries out the reaction (3R)-hydroxydecanoyl-[ACP] = (2E)-decenoyl-[ACP] + H2O. The enzyme catalyses (2E)-decenoyl-[ACP] = (3Z)-decenoyl-[ACP]. Its pathway is lipid metabolism; fatty acid biosynthesis. Necessary for the introduction of cis unsaturation into fatty acids. Catalyzes the dehydration of (3R)-3-hydroxydecanoyl-ACP to E-(2)-decenoyl-ACP and then its isomerization to Z-(3)-decenoyl-ACP. Can catalyze the dehydratase reaction for beta-hydroxyacyl-ACPs with saturated chain lengths up to 16:0, being most active on intermediate chain length. This is 3-hydroxydecanoyl-[acyl-carrier-protein] dehydratase from Xanthomonas axonopodis pv. citri (strain 306).